The following is a 487-amino-acid chain: UDP-N-acetylmuramoyl-L-alanyl-D-glutamate--2,6-diaminopimelate ligase (487 aa).

Positions 23 and 25 each coordinate UDP-N-acetyl-alpha-D-muramoyl-L-alanyl-D-glutamate. Residue 108 to 114 (GTNGKTS) participates in ATP binding. Residues 150–151 (TT), Ser-177, Gln-183, and Arg-185 contribute to the UDP-N-acetyl-alpha-D-muramoyl-L-alanyl-D-glutamate site. An N6-carboxylysine modification is found at Lys-217. Residues Arg-378, 402–405 (DNPR), Gly-453, and Glu-457 contribute to the meso-2,6-diaminopimelate site. Positions 402–405 (DNPR) match the Meso-diaminopimelate recognition motif motif.

It belongs to the MurCDEF family. MurE subfamily. It depends on Mg(2+) as a cofactor. Post-translationally, carboxylation is probably crucial for Mg(2+) binding and, consequently, for the gamma-phosphate positioning of ATP.

The protein localises to the cytoplasm. It carries out the reaction UDP-N-acetyl-alpha-D-muramoyl-L-alanyl-D-glutamate + meso-2,6-diaminopimelate + ATP = UDP-N-acetyl-alpha-D-muramoyl-L-alanyl-gamma-D-glutamyl-meso-2,6-diaminopimelate + ADP + phosphate + H(+). Its pathway is cell wall biogenesis; peptidoglycan biosynthesis. Its function is as follows. Catalyzes the addition of meso-diaminopimelic acid to the nucleotide precursor UDP-N-acetylmuramoyl-L-alanyl-D-glutamate (UMAG) in the biosynthesis of bacterial cell-wall peptidoglycan. This is UDP-N-acetylmuramoyl-L-alanyl-D-glutamate--2,6-diaminopimelate ligase from Pseudomonas syringae pv. tomato (strain ATCC BAA-871 / DC3000).